The following is a 155-amino-acid chain: 17.6 kDa class I heat shock protein 1 (155 aa).

The sHSP domain maps to 39–154 (SSSAIANARV…KAQVKSIDIS (116 aa)).

This sequence belongs to the small heat shock protein (HSP20) family. As to quaternary structure, forms oligomeric structures. Binds to AKR2A.

The protein resides in the cytoplasm. Its function is as follows. Possesses chaperone activity. The chain is 17.6 kDa class I heat shock protein 1 (HSP17.6A) from Arabidopsis thaliana (Mouse-ear cress).